The sequence spans 352 residues: Protein CIA1 (352 aa).

7 WD repeats span residues 18 to 64 (GHTD…RSWT), 72 to 111 (THTRTVRSCAWSPSGQLLATASFDGTTGIWKNYGSEFECI), 116 to 155 (GHENEVKSVSWNASGSCLATCSRDKSVWIWEVLEGNEYDC), 161 to 200 (GHTQDVKMVQWHPTMDVLFSCSYDNTIKVWWSEDDDGEYQ), 211 to 250 (GHSSTVWSISFNAAGDKMVTCSDDLTLKIWGTDIAKMQSG), 265 to 303 (YHDRTIYSAHWSRDDIIASGAGDNAIRLFVDSKHDSVDG), and 315 to 352 (AHENDVNSVQWSPGEGNRLLASASDDGMVKIWQLATKP).

Belongs to the WD repeat CIA1 family. Part of a complex composed of AE7, CIA1, MMS19 and NAR1. Interacts with AE7 and NAR1.

The protein localises to the nucleus. The protein resides in the cytoplasm. Its function is as follows. Essential component of the cytosolic iron-sulfur (Fe-S) protein assembly (CIA) machinery. Required for the maturation of extramitochondrial Fe/S proteins. In Arabidopsis thaliana (Mouse-ear cress), this protein is Protein CIA1.